Reading from the N-terminus, the 345-residue chain is MEAFSQLVQQAAQAFEKARTPAELEDAKAAFLGKSGELTARMKQLASLPVDEKKARGAEINAAKQQVEAALTARRQAMADAELAQQLRAESLDVTLPGRRRGSGGLHPITRAMERIEAIFGSMGFEVADGPEIETDWFNFTALNTPADHPARSMHDTFYVEGGQVLRTHTSPMQIRHAVRHVKAHRAALDAGLPMPEIRVIAPGRTYRVDSDATHSPMFHQVEGLWVGQNISFKDLKSVYVSFIRAFFETSDLQIRFRPSYFPFTEPSAEIDMMFGSGPLKGRWLEVSGSGQVHPQVIRNMGLDPERYIGFAFGSGIDRLAMLRYGVSDLRLFFDGDLRFLSQFK.

E266 serves as a coordination point for Mg(2+).

It belongs to the class-II aminoacyl-tRNA synthetase family. Phe-tRNA synthetase alpha subunit type 1 subfamily. In terms of assembly, tetramer of two alpha and two beta subunits. The cofactor is Mg(2+).

Its subcellular location is the cytoplasm. The catalysed reaction is tRNA(Phe) + L-phenylalanine + ATP = L-phenylalanyl-tRNA(Phe) + AMP + diphosphate + H(+). The protein is Phenylalanine--tRNA ligase alpha subunit of Methylibium petroleiphilum (strain ATCC BAA-1232 / LMG 22953 / PM1).